A 208-amino-acid polypeptide reads, in one-letter code: Heavy metal-associated isoprenylated plant protein 42 (208 aa).

Residues 6–70 (FPICILKMNL…AVAKLGQSPQ (65 aa)) form the HMA domain. The tract at residues 93–116 (ATNKTQDKPSPPAPPVTATTPVET) is disordered. Cys-205 is subject to Cysteine methyl ester. The S-farnesyl cysteine moiety is linked to residue Cys-205. The propeptide at 206–208 (SIM) is removed in mature form.

Belongs to the HIPP family.

Functionally, probable heavy-metal-binding protein. This chain is Heavy metal-associated isoprenylated plant protein 42, found in Arabidopsis thaliana (Mouse-ear cress).